The sequence spans 339 residues: Serpentine receptor class delta-32 (339 aa).

7 helical membrane passes run 14 to 34 (AAVVSTLGIIFNGFLLFLIFF), 45 to 65 (VFLANTSITQLGYCICFLLTV), 94 to 114 (IFTTMLHFAVNSFLSIMLSMV), 128 to 148 (SGAFAMCILAYMIPLSMVVSI), 188 to 208 (LWVACCVSILCIPIYSVMFWC), 237 to 257 (ALTVQSLIPVFTLFPASLIFL), and 269 to 289 (FGYIIISLLSLSPTIDPLVTI).

The protein belongs to the nematode receptor-like protein srd family.

It localises to the membrane. This chain is Serpentine receptor class delta-32 (srd-32), found in Caenorhabditis elegans.